A 448-amino-acid polypeptide reads, in one-letter code: Tubulin beta chain (448 aa).

The GTP site is built by glutamine 11, glutamate 69, serine 138, glycine 142, threonine 143, glycine 144, asparagine 204, and asparagine 226. Glutamate 69 contacts Mg(2+). Positions 425–448 (YQDASISEGEEEYLEEEEPLEHEE) are disordered. Residues 432-448 (EGEEEYLEEEEPLEHEE) show a composition bias toward acidic residues.

It belongs to the tubulin family. In terms of assembly, dimer of alpha and beta chains. A typical microtubule is a hollow water-filled tube with an outer diameter of 25 nm and an inner diameter of 15 nM. Alpha-beta heterodimers associate head-to-tail to form protofilaments running lengthwise along the microtubule wall with the beta-tubulin subunit facing the microtubule plus end conferring a structural polarity. Microtubules usually have 13 protofilaments but different protofilament numbers can be found in some organisms and specialized cells. Requires Mg(2+) as cofactor.

It localises to the cytoplasm. The protein localises to the cytoskeleton. Functionally, tubulin is the major constituent of microtubules, a cylinder consisting of laterally associated linear protofilaments composed of alpha- and beta-tubulin heterodimers. Microtubules grow by the addition of GTP-tubulin dimers to the microtubule end, where a stabilizing cap forms. Below the cap, tubulin dimers are in GDP-bound state, owing to GTPase activity of alpha-tubulin. The protein is Tubulin beta chain (benR) of Aspergillus parasiticus.